A 45-amino-acid chain; its full sequence is MSKRTFQPNNRRRAKTHGFRLRMRTRAGRAILASRRGKGRASLSA.

Belongs to the bacterial ribosomal protein bL34 family.

This is Large ribosomal subunit protein bL34 from Streptomyces avermitilis (strain ATCC 31267 / DSM 46492 / JCM 5070 / NBRC 14893 / NCIMB 12804 / NRRL 8165 / MA-4680).